Reading from the N-terminus, the 152-residue chain is Transcriptional regulator MraZ (152 aa).

SpoVT-AbrB domains follow at residues 5 to 52 (ASAI…PIHE) and 81 to 124 (AHEV…DEQS).

It belongs to the MraZ family. As to quaternary structure, forms oligomers.

It is found in the cytoplasm. It localises to the nucleoid. This chain is Transcriptional regulator MraZ, found in Shewanella baltica (strain OS155 / ATCC BAA-1091).